A 191-amino-acid chain; its full sequence is Somatotropin (191 aa).

Histidine 20 provides a ligand contact to Zn(2+). Cysteine 53 and cysteine 164 form a disulfide bridge. Glutamate 173 contacts Zn(2+). A disulfide bond links cysteine 181 and cysteine 189.

It belongs to the somatotropin/prolactin family.

It localises to the secreted. Its function is as follows. Growth hormone plays an important role in growth control and is involved in the regulation of several anabolic processes. Implicated as an osmoregulatory substance important for seawater adaptation. This is Somatotropin (GH) from Chelonia mydas (Green sea-turtle).